Reading from the N-terminus, the 443-residue chain is Chromosomal replication initiator protein DnaA (443 aa).

The interval 1–80 (MFLEEKLNLV…ETCGDKIPVE (80 aa)) is domain I, interacts with DnaA modulators. The segment at 80–104 (EILIETKAASPLQSILEKSFDQKDF) is domain II. The tract at residues 105–321 (QFNPDYTFET…GALNDIYLYK (217 aa)) is domain III, AAA+ region. Residues Gly148, Gly150, Lys151, and Thr152 each contribute to the ATP site. Positions 322–443 (KSYSLLFLNL…ERISSKYKLQ (122 aa)) are domain IV, binds dsDNA.

It belongs to the DnaA family. Oligomerizes as a right-handed, spiral filament on DNA at oriC.

Its subcellular location is the cytoplasm. Its function is as follows. Plays an essential role in the initiation and regulation of chromosomal replication. ATP-DnaA binds to the origin of replication (oriC) to initiate formation of the DNA replication initiation complex once per cell cycle. Binds the DnaA box (a 9 base pair repeat at the origin) and separates the double-stranded (ds)DNA. Forms a right-handed helical filament on oriC DNA; dsDNA binds to the exterior of the filament while single-stranded (ss)DNA is stabiized in the filament's interior. The ATP-DnaA-oriC complex binds and stabilizes one strand of the AT-rich DNA unwinding element (DUE), permitting loading of DNA polymerase. After initiation quickly degrades to an ADP-DnaA complex that is not apt for DNA replication. Binds acidic phospholipids. The sequence is that of Chromosomal replication initiator protein DnaA from Leptospira interrogans serogroup Icterohaemorrhagiae serovar copenhageni (strain Fiocruz L1-130).